Here is a 185-residue protein sequence, read N- to C-terminus: Ribosome-recycling factor (185 aa).

It belongs to the RRF family.

The protein localises to the cytoplasm. Functionally, responsible for the release of ribosomes from messenger RNA at the termination of protein biosynthesis. May increase the efficiency of translation by recycling ribosomes from one round of translation to another. The chain is Ribosome-recycling factor from Enterobacter sp. (strain 638).